Here is a 140-residue protein sequence, read N- to C-terminus: Translation initiation factor 2 subunit beta (140 aa).

This sequence belongs to the eIF-2-beta/eIF-5 family. As to quaternary structure, heterotrimer composed of an alpha, a beta and a gamma chain.

EIF-2 functions in the early steps of protein synthesis by forming a ternary complex with GTP and initiator tRNA. This Pyrococcus horikoshii (strain ATCC 700860 / DSM 12428 / JCM 9974 / NBRC 100139 / OT-3) protein is Translation initiation factor 2 subunit beta (eif2b).